A 293-amino-acid polypeptide reads, in one-letter code: ATP synthase gamma chain (293 aa).

Belongs to the ATPase gamma chain family. F-type ATPases have 2 components, CF(1) - the catalytic core - and CF(0) - the membrane proton channel. CF(1) has five subunits: alpha(3), beta(3), gamma(1), delta(1), epsilon(1). CF(0) has three main subunits: a, b and c.

Its subcellular location is the cell membrane. Functionally, produces ATP from ADP in the presence of a proton gradient across the membrane. The gamma chain is believed to be important in regulating ATPase activity and the flow of protons through the CF(0) complex. This chain is ATP synthase gamma chain, found in Methylacidiphilum infernorum (isolate V4) (Methylokorus infernorum (strain V4)).